A 342-amino-acid polypeptide reads, in one-letter code: N-acetyl-gamma-glutamyl-phosphate reductase (342 aa).

Cys148 is a catalytic residue.

It belongs to the NAGSA dehydrogenase family. Type 1 subfamily.

The protein localises to the cytoplasm. It catalyses the reaction N-acetyl-L-glutamate 5-semialdehyde + phosphate + NADP(+) = N-acetyl-L-glutamyl 5-phosphate + NADPH + H(+). The protein operates within amino-acid biosynthesis; L-arginine biosynthesis; N(2)-acetyl-L-ornithine from L-glutamate: step 3/4. In terms of biological role, catalyzes the NADPH-dependent reduction of N-acetyl-5-glutamyl phosphate to yield N-acetyl-L-glutamate 5-semialdehyde. This chain is N-acetyl-gamma-glutamyl-phosphate reductase, found in Methanococcus vannielii (strain ATCC 35089 / DSM 1224 / JCM 13029 / OCM 148 / SB).